The sequence spans 124 residues: S-adenosylmethionine decarboxylase proenzyme (124 aa).

The active-site Schiff-base intermediate with substrate; via pyruvic acid is S63. Residue S63 is modified to Pyruvic acid (Ser); by autocatalysis. H68 serves as the catalytic Proton acceptor; for processing activity. C83 acts as the Proton donor; for catalytic activity in catalysis.

The protein belongs to the prokaryotic AdoMetDC family. Type 1 subfamily. Heterotetramer of two alpha and two beta chains arranged as a dimer of alpha/beta heterodimers. The cofactor is pyruvate. Is synthesized initially as an inactive proenzyme. Formation of the active enzyme involves a self-maturation process in which the active site pyruvoyl group is generated from an internal serine residue via an autocatalytic post-translational modification. Two non-identical subunits are generated from the proenzyme in this reaction, and the pyruvate is formed at the N-terminus of the alpha chain, which is derived from the carboxyl end of the proenzyme. The post-translation cleavage follows an unusual pathway, termed non-hydrolytic serinolysis, in which the side chain hydroxyl group of the serine supplies its oxygen atom to form the C-terminus of the beta chain, while the remainder of the serine residue undergoes an oxidative deamination to produce ammonia and the pyruvoyl group blocking the N-terminus of the alpha chain.

It catalyses the reaction S-adenosyl-L-methionine + H(+) = S-adenosyl 3-(methylsulfanyl)propylamine + CO2. Its pathway is amine and polyamine biosynthesis; S-adenosylmethioninamine biosynthesis; S-adenosylmethioninamine from S-adenosyl-L-methionine: step 1/1. Catalyzes the decarboxylation of S-adenosylmethionine to S-adenosylmethioninamine (dcAdoMet), the propylamine donor required for the synthesis of the polyamines spermine and spermidine from the diamine putrescine. In Geobacillus sp. (strain WCH70), this protein is S-adenosylmethionine decarboxylase proenzyme.